We begin with the raw amino-acid sequence, 155 residues long: Transcription antitermination protein NusB (155 aa).

The protein belongs to the NusB family.

In terms of biological role, involved in transcription antitermination. Required for transcription of ribosomal RNA (rRNA) genes. Binds specifically to the boxA antiterminator sequence of the ribosomal RNA (rrn) operons. The chain is Transcription antitermination protein NusB from Vibrio parahaemolyticus serotype O3:K6 (strain RIMD 2210633).